We begin with the raw amino-acid sequence, 212 residues long: Ribosomal RNA small subunit methyltransferase G (212 aa).

Residues Gly-80, Leu-85, 131-132, and Arg-146 each bind S-adenosyl-L-methionine; that span reads AE.

The protein belongs to the methyltransferase superfamily. RNA methyltransferase RsmG family.

The protein localises to the cytoplasm. It catalyses the reaction guanosine(527) in 16S rRNA + S-adenosyl-L-methionine = N(7)-methylguanosine(527) in 16S rRNA + S-adenosyl-L-homocysteine. Its function is as follows. Specifically methylates the N7 position of guanine in position 527 of 16S rRNA. The chain is Ribosomal RNA small subunit methyltransferase G from Stenotrophomonas maltophilia (strain R551-3).